The sequence spans 191 residues: Fe/S biogenesis protein NfuA (191 aa).

[4Fe-4S] cluster-binding residues include cysteine 149 and cysteine 152.

Belongs to the NfuA family. As to quaternary structure, homodimer. [4Fe-4S] cluster serves as cofactor.

Its function is as follows. Involved in iron-sulfur cluster biogenesis. Binds a 4Fe-4S cluster, can transfer this cluster to apoproteins, and thereby intervenes in the maturation of Fe/S proteins. Could also act as a scaffold/chaperone for damaged Fe/S proteins. This Salmonella choleraesuis (strain SC-B67) protein is Fe/S biogenesis protein NfuA.